Here is a 144-residue protein sequence, read N- to C-terminus: Major allergen Blo t 12 (144 aa).

The first 20 residues, 1–20 (MKSVLIFLVAIALFSANIVS), serve as a signal peptide directing secretion. The tract at residues 24–77 (QTTRGRHTEPDDHHEKPTTQCTHEETTSTQHHHEEVVTTQTPHHEEKTTTEETH) is disordered. One can recognise a Chitin-binding type-2 domain in the interval 92 to 144 (HVVCHEEGPIHIQEMCNKYIICSKSGSLWYITVMPCSIGTKFDPISRNCVLDN). Residues Cys127 and Cys140 are joined by a disulfide bond.

In Blomia tropicalis (Mite), this protein is Major allergen Blo t 12.